The sequence spans 26 residues: Neprilysin (26 aa).

It belongs to the peptidase M13 family. Zn(2+) serves as cofactor.

The protein localises to the cell membrane. It carries out the reaction Preferential cleavage of polypeptides between hydrophobic residues, particularly with Phe or Tyr at P1'.. It catalyses the reaction substance P + H2O = substance P(1-9) + L-Leu-L-Met-NH2. The catalysed reaction is substance P + H2O = substance P(1-7) + L-Phe-Gly-L-Leu-L-Met-NH2. The enzyme catalyses neurotensin + H2O = neurotensin(1-11) + L-isoleucyl-L-leucine. It carries out the reaction neurotensin + H2O = neurotensin(1-10) + L-tyrosyl-L-isoleucyl-L-leucine. In terms of biological role, thermolysin-like specificity, but is almost confined on acting on polypeptides of up to 30 amino acids. Biologically important in the destruction of opioid peptides such as Met- and Leu-enkephalins by cleavage of a Gly-Phe bond. Catalyzes cleavage of bradykinin, substance P and neurotensin peptides. Able to cleave angiotensin-1, angiotensin-2 and angiotensin 1-9. Involved in the degradation of atrial natriuretic factor (ANF) and brain natriuretic factor (BNP(1-32)). Displays UV-inducible elastase activity toward skin preelastic and elastic fibers. This is Neprilysin (MME) from Sus scrofa (Pig).